The primary structure comprises 240 residues: Phosphatidylserine decarboxylase proenzyme (240 aa).

S209 acts as the Schiff-base intermediate with substrate; via pyruvic acid in catalysis. S209 carries the pyruvic acid (Ser); by autocatalysis modification.

The protein belongs to the phosphatidylserine decarboxylase family. PSD-A subfamily. In terms of assembly, heterodimer of a large membrane-associated beta subunit and a small pyruvoyl-containing alpha subunit. Pyruvate is required as a cofactor. Is synthesized initially as an inactive proenzyme. Formation of the active enzyme involves a self-maturation process in which the active site pyruvoyl group is generated from an internal serine residue via an autocatalytic post-translational modification. Two non-identical subunits are generated from the proenzyme in this reaction, and the pyruvate is formed at the N-terminus of the alpha chain, which is derived from the carboxyl end of the proenzyme. The post-translation cleavage follows an unusual pathway, termed non-hydrolytic serinolysis, in which the side chain hydroxyl group of the serine supplies its oxygen atom to form the C-terminus of the beta chain, while the remainder of the serine residue undergoes an oxidative deamination to produce ammonia and the pyruvoyl prosthetic group on the alpha chain.

The protein resides in the cell membrane. It catalyses the reaction a 1,2-diacyl-sn-glycero-3-phospho-L-serine + H(+) = a 1,2-diacyl-sn-glycero-3-phosphoethanolamine + CO2. Its pathway is phospholipid metabolism; phosphatidylethanolamine biosynthesis; phosphatidylethanolamine from CDP-diacylglycerol: step 2/2. Functionally, catalyzes the formation of phosphatidylethanolamine (PtdEtn) from phosphatidylserine (PtdSer). In Mycobacterium avium (strain 104), this protein is Phosphatidylserine decarboxylase proenzyme.